The following is a 311-amino-acid chain: Syndecan-1 (311 aa).

The first 22 residues, 1–22, serve as a signal peptide directing secretion; that stretch reads MRRAALWLWLCALALRLQPALL. At 23–255 the chain is on the extracellular side; the sequence is HSVAVNMPPE…GLLDRKEVLG (233 aa). Disordered regions lie at residues 31–85 and 141–244; these read PEDQ…PDAI and TMAP…TGAS. The span at 32–42 shows a compositional bias: acidic residues; sequence EDQDGSGDDSD. Serine 37 is a glycosylation site (O-linked (Xyl...) (chondroitin sulfate) serine). An N-linked (GlcNAc...) asparagine glycan is attached at asparagine 43. O-linked (Xyl...) (heparan sulfate) serine glycosylation is found at serine 45 and serine 47. Over residues 71 to 84 the composition is skewed to low complexity; the sequence is TTTATAPEPTSPDA. Basic and acidic residues-rich tracts occupy residues 151 to 162 and 169 to 180; these read PHRDVQPDHHET and GRMEPHRPHVEE. Serine 204 and serine 214 each carry an O-linked (Xyl...) (chondroitin sulfate) serine glycan. The segment covering 215–226 has biased composition (low complexity); it reads GENAAGAAGEPG. A helical membrane pass occupies residues 256-276; that stretch reads GVIAGGLVGLIFAVCLVGFML. At 277–311 the chain is on the cytoplasmic side; the sequence is YRMKKKDEGSYSLEEPKQANGGAYQKPTKQEEFYA. Residues 285–311 form a disordered region; that stretch reads GSYSLEEPKQANGGAYQKPTKQEEFYA. Serine 286 is modified (phosphoserine).

This sequence belongs to the syndecan proteoglycan family. Interacts with CDCP1. Interacts (via C-terminus) with TIAM1 (via PDZ domain). Interacts with MDK. Post-translationally, shedding is enhanced by a number of factors such as heparanase, thrombin or EGF. Also by stress and wound healing. PMA-mediated shedding is inhibited by TIMP3.

The protein localises to the membrane. The protein resides in the secreted. Its subcellular location is the extracellular exosome. In terms of biological role, cell surface proteoglycan that contains both heparan sulfate and chondroitin sulfate and that links the cytoskeleton to the interstitial matrix. Regulates exosome biogenesis in concert with SDCBP and PDCD6IP. Able to induce its own expression in dental mesenchymal cells and also in the neighboring dental epithelial cells via an MSX1-mediated pathway. The polypeptide is Syndecan-1 (Bos taurus (Bovine)).